Here is an 85-residue protein sequence, read N- to C-terminus: MAHKKAGGSSRNGRDSHSKRLGVKRYGGEVIRAGGIIVRQRGTQFHPGDNVGIGRDHTLFAKVDGKIVFTIRGRLNRRTVAVIPS.

The tract at residues 1-24 is disordered; sequence MAHKKAGGSSRNGRDSHSKRLGVK.

Belongs to the bacterial ribosomal protein bL27 family.

The protein is Large ribosomal subunit protein bL27 of Nitrosomonas eutropha (strain DSM 101675 / C91 / Nm57).